A 101-amino-acid chain; its full sequence is Small ribosomal subunit protein eS24 (101 aa).

The protein belongs to the eukaryotic ribosomal protein eS24 family.

This chain is Small ribosomal subunit protein eS24, found in Methanosarcina barkeri (strain Fusaro / DSM 804).